Reading from the N-terminus, the 215-residue chain is Probable transaldolase (215 aa).

The Schiff-base intermediate with substrate role is filled by Lys-83.

The protein belongs to the transaldolase family. Type 3B subfamily.

Its subcellular location is the cytoplasm. The enzyme catalyses D-sedoheptulose 7-phosphate + D-glyceraldehyde 3-phosphate = D-erythrose 4-phosphate + beta-D-fructose 6-phosphate. The protein operates within carbohydrate degradation; pentose phosphate pathway; D-glyceraldehyde 3-phosphate and beta-D-fructose 6-phosphate from D-ribose 5-phosphate and D-xylulose 5-phosphate (non-oxidative stage): step 2/3. Transaldolase is important for the balance of metabolites in the pentose-phosphate pathway. This chain is Probable transaldolase, found in Streptococcus agalactiae serotype III (strain NEM316).